The chain runs to 20 residues: ATP synthase subunit beta, chloroplastic (20 aa).

A compositionally biased stretch (polar residues) spans 1 to 10 (METTNESLGY). Residues 1–20 (METTNESLGYTDQIIGPVLD) are disordered.

This sequence belongs to the ATPase alpha/beta chains family. F-type ATPases have 2 components, CF(1) - the catalytic core - and CF(0) - the membrane proton channel. CF(1) has five subunits: alpha(3), beta(3), gamma(1), delta(1), epsilon(1). CF(0) has four main subunits: a(1), b(1), b'(1) and c(9-12).

It localises to the plastid. The protein localises to the chloroplast thylakoid membrane. The enzyme catalyses ATP + H2O + 4 H(+)(in) = ADP + phosphate + 5 H(+)(out). Produces ATP from ADP in the presence of a proton gradient across the membrane. The catalytic sites are hosted primarily by the beta subunits. The protein is ATP synthase subunit beta, chloroplastic of Chattonella marina var. antiqua (Red tide flagellate).